The sequence spans 921 residues: Isoleucine--tRNA ligase 1 (921 aa).

A 'HIGH' region motif is present at residues 57–67 (PYANGDIHMGH). Glu-552 contributes to the L-isoleucyl-5'-AMP binding site. The 'KMSKS' region signature appears at 593 to 597 (KMSKS). Lys-596 contributes to the ATP binding site. Positions 888, 891, 908, and 911 each coordinate Zn(2+).

The protein belongs to the class-I aminoacyl-tRNA synthetase family. IleS type 1 subfamily. In terms of assembly, monomer. Zn(2+) serves as cofactor.

It is found in the cytoplasm. The catalysed reaction is tRNA(Ile) + L-isoleucine + ATP = L-isoleucyl-tRNA(Ile) + AMP + diphosphate. Its function is as follows. Catalyzes the attachment of isoleucine to tRNA(Ile). As IleRS can inadvertently accommodate and process structurally similar amino acids such as valine, to avoid such errors it has two additional distinct tRNA(Ile)-dependent editing activities. One activity is designated as 'pretransfer' editing and involves the hydrolysis of activated Val-AMP. The other activity is designated 'posttransfer' editing and involves deacylation of mischarged Val-tRNA(Ile). This is Isoleucine--tRNA ligase 1 from Bacillus cereus (strain ATCC 10987 / NRS 248).